The chain runs to 349 residues: tRNA N6-adenosine threonylcarbamoyltransferase (349 aa).

Residues H117 and H121 each coordinate Fe cation. Residues 139 to 143 (QVSGG), D172, G185, D189, and N278 contribute to the substrate site. D310 serves as a coordination point for Fe cation.

Belongs to the KAE1 / TsaD family. The cofactor is Fe(2+).

It localises to the cytoplasm. It catalyses the reaction L-threonylcarbamoyladenylate + adenosine(37) in tRNA = N(6)-L-threonylcarbamoyladenosine(37) in tRNA + AMP + H(+). Functionally, required for the formation of a threonylcarbamoyl group on adenosine at position 37 (t(6)A37) in tRNAs that read codons beginning with adenine. Is involved in the transfer of the threonylcarbamoyl moiety of threonylcarbamoyl-AMP (TC-AMP) to the N6 group of A37, together with TsaE and TsaB. TsaD likely plays a direct catalytic role in this reaction. In Lactobacillus acidophilus (strain ATCC 700396 / NCK56 / N2 / NCFM), this protein is tRNA N6-adenosine threonylcarbamoyltransferase.